A 277-amino-acid chain; its full sequence is Putative pyruvate, phosphate dikinase regulatory protein (277 aa).

151 to 158 (GISRTSKT) is a binding site for ADP.

It belongs to the pyruvate, phosphate/water dikinase regulatory protein family. PDRP subfamily.

The catalysed reaction is N(tele)-phospho-L-histidyl/L-threonyl-[pyruvate, phosphate dikinase] + ADP = N(tele)-phospho-L-histidyl/O-phospho-L-threonyl-[pyruvate, phosphate dikinase] + AMP + H(+). It catalyses the reaction N(tele)-phospho-L-histidyl/O-phospho-L-threonyl-[pyruvate, phosphate dikinase] + phosphate + H(+) = N(tele)-phospho-L-histidyl/L-threonyl-[pyruvate, phosphate dikinase] + diphosphate. Its function is as follows. Bifunctional serine/threonine kinase and phosphorylase involved in the regulation of the pyruvate, phosphate dikinase (PPDK) by catalyzing its phosphorylation/dephosphorylation. The sequence is that of Putative pyruvate, phosphate dikinase regulatory protein from Alkaliphilus metalliredigens (strain QYMF).